The primary structure comprises 161 residues: RNA pyrophosphohydrolase (161 aa).

Positions 12 to 154 (PYRIGVGMVI…KRKLYKAVIN (143 aa)) constitute a Nudix hydrolase domain. Positions 46-67 (GGIILGETYSKAVLREMKEEIG) match the Nudix box motif.

Belongs to the Nudix hydrolase family. RppH subfamily. A divalent metal cation is required as a cofactor.

In terms of biological role, accelerates the degradation of transcripts by removing pyrophosphate from the 5'-end of triphosphorylated RNA, leading to a more labile monophosphorylated state that can stimulate subsequent ribonuclease cleavage. In Orientia tsutsugamushi (strain Boryong) (Rickettsia tsutsugamushi), this protein is RNA pyrophosphohydrolase.